The following is a 397-amino-acid chain: Pectate lyase 2 (397 aa).

The first 25 residues, 1–25 (MGIKQCCYILYFTLALVALLQPVRS), serve as a signal peptide directing secretion. N-linked (GlcNAc...) asparagine glycosylation is present at Asn-37. A disulfide bridge connects residues Cys-54 and Cys-71. Residues Asp-194, Asp-218, and Asp-222 each coordinate Ca(2+). Arg-274 is an active-site residue.

This sequence belongs to the polysaccharide lyase 1 family. Amb a subfamily. Monomer. The cofactor is Ca(2+). The N-terminus is blocked. Pollen and flowers.

It catalyses the reaction Eliminative cleavage of (1-&gt;4)-alpha-D-galacturonan to give oligosaccharides with 4-deoxy-alpha-D-galact-4-enuronosyl groups at their non-reducing ends.. The protein operates within glycan metabolism; pectin degradation; 2-dehydro-3-deoxy-D-gluconate from pectin: step 2/5. Its function is as follows. Has pectate lyase activity. This is Pectate lyase 2 from Ambrosia artemisiifolia (Common ragweed).